A 209-amino-acid chain; its full sequence is Pyridoxine/pyridoxamine 5'-phosphate oxidase (209 aa).

Substrate contacts are provided by residues 7–10 and K64; that span reads REDY. FMN contacts are provided by residues 59 to 64, 74 to 75, R80, and K81; these read RIVLLK and FT. Substrate is bound by residues Y121, R125, and S129. FMN contacts are provided by residues 138–139 and W182; that span reads QS. 188–190 serves as a coordination point for substrate; the sequence is RLH. R192 contacts FMN.

Belongs to the pyridoxamine 5'-phosphate oxidase family. In terms of assembly, homodimer. The cofactor is FMN.

It carries out the reaction pyridoxamine 5'-phosphate + O2 + H2O = pyridoxal 5'-phosphate + H2O2 + NH4(+). The enzyme catalyses pyridoxine 5'-phosphate + O2 = pyridoxal 5'-phosphate + H2O2. It participates in cofactor metabolism; pyridoxal 5'-phosphate salvage; pyridoxal 5'-phosphate from pyridoxamine 5'-phosphate: step 1/1. The protein operates within cofactor metabolism; pyridoxal 5'-phosphate salvage; pyridoxal 5'-phosphate from pyridoxine 5'-phosphate: step 1/1. In terms of biological role, catalyzes the oxidation of either pyridoxine 5'-phosphate (PNP) or pyridoxamine 5'-phosphate (PMP) into pyridoxal 5'-phosphate (PLP). The protein is Pyridoxine/pyridoxamine 5'-phosphate oxidase of Actinobacillus pleuropneumoniae serotype 5b (strain L20).